A 1009-amino-acid polypeptide reads, in one-letter code: Serine/threonine-protein phosphatase BSL2 homolog (1009 aa).

A disordered region spans residues 1–48 (MDVDSRMTTESDSDSDAAAQGGGGGGFGSETSSASPSAPGTPTAMGAG). Residues 29–45 (SETSSASPSAPGTPTAM) show a composition bias toward low complexity. Kelch repeat units follow at residues 136–182 (SSAG…VATA), 240–288 (FLLT…TASA), 293–344 (LLLL…FVNA), 349–396 (SGGA…DAAG), and 417–463 (MIYV…IQAG). A disordered region spans residues 549–572 (QVNGEAEHSPDREQSPDATPSVKQ). A compositionally biased stretch (basic and acidic residues) spans 553 to 563 (EAEHSPDREQS). Mn(2+)-binding residues include Asp-711, His-713, Asp-745, and Asn-777. Residue His-778 is the Proton donor of the active site. Mn(2+)-binding residues include His-830 and His-909. Residues 984-1009 (NANRPPTPTRGRPQAANNDRGSLAWI) are disordered.

The protein belongs to the PPP phosphatase family. BSU subfamily. Mn(2+) serves as cofactor.

It localises to the nucleus. The enzyme catalyses O-phospho-L-seryl-[protein] + H2O = L-seryl-[protein] + phosphate. It catalyses the reaction O-phospho-L-threonyl-[protein] + H2O = L-threonyl-[protein] + phosphate. The polypeptide is Serine/threonine-protein phosphatase BSL2 homolog (BSL2) (Oryza sativa subsp. japonica (Rice)).